The primary structure comprises 157 residues: 6,7-dimethyl-8-ribityllumazine synthase (157 aa).

Residues Phe23, 57–59, and 81–83 contribute to the 5-amino-6-(D-ribitylamino)uracil site; these read AFE and AVI. Position 86 to 87 (86 to 87) interacts with (2S)-2-hydroxy-3-oxobutyl phosphate; that stretch reads AT. His89 functions as the Proton donor in the catalytic mechanism. Phe114 provides a ligand contact to 5-amino-6-(D-ribitylamino)uracil. Position 128 (Arg128) interacts with (2S)-2-hydroxy-3-oxobutyl phosphate.

This sequence belongs to the DMRL synthase family.

It catalyses the reaction (2S)-2-hydroxy-3-oxobutyl phosphate + 5-amino-6-(D-ribitylamino)uracil = 6,7-dimethyl-8-(1-D-ribityl)lumazine + phosphate + 2 H2O + H(+). It functions in the pathway cofactor biosynthesis; riboflavin biosynthesis; riboflavin from 2-hydroxy-3-oxobutyl phosphate and 5-amino-6-(D-ribitylamino)uracil: step 1/2. In terms of biological role, catalyzes the formation of 6,7-dimethyl-8-ribityllumazine by condensation of 5-amino-6-(D-ribitylamino)uracil with 3,4-dihydroxy-2-butanone 4-phosphate. This is the penultimate step in the biosynthesis of riboflavin. The protein is 6,7-dimethyl-8-ribityllumazine synthase of Desulforapulum autotrophicum (strain ATCC 43914 / DSM 3382 / VKM B-1955 / HRM2) (Desulfobacterium autotrophicum).